Reading from the N-terminus, the 263-residue chain is Interleukin-22 receptor subunit alpha-2 (263 aa).

The signal sequence occupies residues 1-21 (MMPKHCFLGFLISFFLTGVAG). 3 consecutive Fibronectin type-III domains span residues 26–68 (HESL…KIMF), 100–161 (GQRQ…TKID), and 162–263 (PPVM…VEIP). N-linked (GlcNAc...) asparagine glycosylation occurs at Asn56. A disulfide bridge links Cys110 with Cys118. 4 N-linked (GlcNAc...) asparagine glycosylation sites follow: Asn166, Asn171, Asn192, and Asn209. Residues Cys238 and Cys259 are joined by a disulfide bond.

The protein belongs to the type II cytokine receptor family. As to expression, expressed in placenta, spleen, breast, skin and lung. Also detected in intestinal tract, testis, brain, heart and thymus. No expression found in prostate, bladder, kidney, ovary, muscle, bone marrow, liver and uterus. Isoform 1 is expressed only in placenta. Isoform 2 is expressed in placenta and breast and at lower level in spleen, skin, thymus and stomach.

The protein localises to the secreted. In terms of biological role, isoform 2 is a receptor for IL22. Binds to IL22, prevents interaction with the functional IL-22R complex and blocks the activity of IL22 (in vitro). May play an important role as an IL22 antagonist in the regulation of inflammatory responses. Isoform 1 may play a role in establishing and maintaining successful pregnancy. The chain is Interleukin-22 receptor subunit alpha-2 (IL22RA2) from Homo sapiens (Human).